Reading from the N-terminus, the 159-residue chain is Siroheme decarboxylase beta subunit (159 aa).

152-157 provides a ligand contact to substrate; sequence KTSMTY.

Belongs to the Ahb/Nir family. Forms a heterodimer composed of AhbA and AhbB.

The catalysed reaction is siroheme + 2 H(+) = 12,18-didecarboxysiroheme + 2 CO2. It functions in the pathway porphyrin-containing compound metabolism; protoheme biosynthesis. Functionally, involved in siroheme-dependent heme b biosynthesis. Catalyzes the decarboxylation of siroheme into didecarboxysiroheme. Siroheme is decarboxylated to monodecarboxysiroheme, which is in turn decarboxylated to didecarboxysiroheme. The protein is Siroheme decarboxylase beta subunit of Desulfovibrio desulfuricans (strain ATCC 27774 / DSM 6949 / MB).